Consider the following 735-residue polypeptide: Mitochondrial potassium channel ATP-binding subunit (735 aa).

Residues 1–25 constitute a mitochondrion transit peptide; the sequence is MLVHLFRVGIRGGPFPGRLLPPLRF. The Mitochondrial matrix segment spans residues 26–144; that stretch reads QTFSAVRNTW…KLFWQFLHPH (119 aa). The chain crosses the membrane as a helical span at residues 145–165; it reads LLVLGVAVVLALGAALVNVQI. The region spanning 150–437 is the ABC transmembrane type-1 domain; sequence VAVVLALGAA…LSVLFGQVVR (288 aa). The Mitochondrial intermembrane portion of the chain corresponds to 166–195; the sequence is PLLLGQLVEVVAKYTRDHVGSFMTESQNLS. The helical transmembrane segment at 196–216 threads the bilayer; sequence THLLILYGVQGLLTFGYLVLL. Residues 217–295 lie on the Mitochondrial matrix side of the membrane; it reads SHVGERMAVD…SLSMLSTRLT (79 aa). The helical transmembrane segment at 296-316 threads the bilayer; the sequence is LLLMVATPALMGVGTLMGSGL. Topologically, residues 317 to 735 are mitochondrial intermembrane; sequence RKLSRQCQEQ…EGPRSHQHKS (419 aa). One can recognise an ABC transporter domain in the interval 472–709; it reads VTFQNVCFSY…GGLYAELIRR (238 aa). 507–514 contributes to the ATP binding site; it reads GQSGGGKT. The disordered stretch occupies residues 712 to 735; the sequence is LDAPRTAAPPPKKPEGPRSHQHKS.

This sequence belongs to the ABC transporter superfamily. ABCB family. Multidrug resistance exporter (TC 3.A.1.201) subfamily. The mitochondrial potassium channel (mitoK(ATP)) is composed of 4 subunits of CCDC51/MITOK and 4 subunits of ABCB8/MITOSUR. Interacts with C10orf88/PAAT. Interacts with NRP1; NRP1 regulates ABCB8/MITOSUR protein levels in mitochondria. Ubiquitous.

It localises to the mitochondrion inner membrane. Its activity is regulated as follows. Channel activity inhibited by ATP via ABCB8/MITOSUR subunit. Functionally, ATP-binding subunit of the mitochondrial ATP-gated potassium channel (mitoK(ATP)). Together with pore-forming subunit CCDC51/MITOK of the mitoK(ATP) channel, mediates ATP-dependent potassium currents across the mitochondrial inner membrane. An increase in ATP intracellular levels closes the channel, inhibiting K(+) transport, whereas a decrease in ATP levels enhances K(+) uptake in the mitochondrial matrix. Plays a role in mitochondrial iron transport. Required for maintenance of normal cardiac function, possibly by influencing mitochondrial iron export and regulating the maturation of cytosolic iron sulfur cluster-containing enzymes. This is Mitochondrial potassium channel ATP-binding subunit from Homo sapiens (Human).